Here is a 237-residue protein sequence, read N- to C-terminus: Phosphoribosylaminoimidazole-succinocarboxamide synthase (237 aa).

Belongs to the SAICAR synthetase family.

The enzyme catalyses 5-amino-1-(5-phospho-D-ribosyl)imidazole-4-carboxylate + L-aspartate + ATP = (2S)-2-[5-amino-1-(5-phospho-beta-D-ribosyl)imidazole-4-carboxamido]succinate + ADP + phosphate + 2 H(+). Its pathway is purine metabolism; IMP biosynthesis via de novo pathway; 5-amino-1-(5-phospho-D-ribosyl)imidazole-4-carboxamide from 5-amino-1-(5-phospho-D-ribosyl)imidazole-4-carboxylate: step 1/2. The sequence is that of Phosphoribosylaminoimidazole-succinocarboxamide synthase from Deinococcus radiodurans (strain ATCC 13939 / DSM 20539 / JCM 16871 / CCUG 27074 / LMG 4051 / NBRC 15346 / NCIMB 9279 / VKM B-1422 / R1).